We begin with the raw amino-acid sequence, 211 residues long: Urease accessory protein UreG (211 aa).

13–20 is a binding site for GTP; it reads GPVGSGKT.

The protein belongs to the SIMIBI class G3E GTPase family. UreG subfamily. As to quaternary structure, homodimer. UreD, UreF and UreG form a complex that acts as a GTP-hydrolysis-dependent molecular chaperone, activating the urease apoprotein by helping to assemble the nickel containing metallocenter of UreC. The UreE protein probably delivers the nickel.

It localises to the cytoplasm. Its function is as follows. Facilitates the functional incorporation of the urease nickel metallocenter. This process requires GTP hydrolysis, probably effectuated by UreG. The polypeptide is Urease accessory protein UreG (Alkalilimnicola ehrlichii (strain ATCC BAA-1101 / DSM 17681 / MLHE-1)).